A 785-amino-acid chain; its full sequence is Semaphorin-3F (785 aa).

Positions 1-18 are cleaved as a signal peptide; the sequence is MLVAGLLLWASLLTGAWP. Residues 31-545 form the Sema domain; it reads RVRLSFKELK…SAVGVTHLSL (515 aa). The N-linked (GlcNAc...) asparagine glycan is linked to Asn-53. Cys-104 and Cys-115 are oxidised to a cystine. N-linked (GlcNAc...) asparagine glycosylation is present at Asn-126. 5 disulfides stabilise this stretch: Cys-133/Cys-142, Cys-300/Cys-412, Cys-324/Cys-372, Cys-548/Cys-566, and Cys-678/Cys-746. The Ig-like C2-type domain maps to 605-690; sequence ANKNAVESVQ…TENNFKHVVT (86 aa). The segment at 752–785 is disordered; that stretch reads HVPPSPREAPGAPRSPEPQDQKKPRNRRHHPPDT. Residues 775–785 are compositionally biased toward basic residues; the sequence is PRNRRHHPPDT.

This sequence belongs to the semaphorin family. Expressed abundantly but differentially in a variety of neural and nonneural tissues. There is high expression in mammary gland, kidney, fetal brain, and lung and lower expression in heart and liver.

Its subcellular location is the secreted. Its function is as follows. May play a role in cell motility and cell adhesion. The chain is Semaphorin-3F (SEMA3F) from Homo sapiens (Human).